A 141-amino-acid polypeptide reads, in one-letter code: Nucleoside diphosphate kinase (141 aa).

ATP contacts are provided by lysine 11, phenylalanine 59, arginine 87, threonine 93, arginine 104, and asparagine 114. Residue histidine 117 is the Pros-phosphohistidine intermediate of the active site.

This sequence belongs to the NDK family. As to quaternary structure, homotetramer. Requires Mg(2+) as cofactor.

The protein resides in the cytoplasm. It catalyses the reaction a 2'-deoxyribonucleoside 5'-diphosphate + ATP = a 2'-deoxyribonucleoside 5'-triphosphate + ADP. The catalysed reaction is a ribonucleoside 5'-diphosphate + ATP = a ribonucleoside 5'-triphosphate + ADP. Functionally, major role in the synthesis of nucleoside triphosphates other than ATP. The ATP gamma phosphate is transferred to the NDP beta phosphate via a ping-pong mechanism, using a phosphorylated active-site intermediate. This chain is Nucleoside diphosphate kinase, found in Burkholderia mallei (strain NCTC 10247).